The following is a 312-amino-acid chain: Pyrimidine-specific ribonucleoside hydrolase RihA (312 aa).

His240 is an active-site residue.

The protein belongs to the IUNH family. RihA subfamily.

Functionally, hydrolyzes cytidine or uridine to ribose and cytosine or uracil, respectively. In Citrobacter koseri (strain ATCC BAA-895 / CDC 4225-83 / SGSC4696), this protein is Pyrimidine-specific ribonucleoside hydrolase RihA.